Here is a 278-residue protein sequence, read N- to C-terminus: MDPWPWLTAALLLLLLLVQLSRTARFYAKVGLYCVLCLSFSAAASIVCLLRHGGRTVDNMSIISWFVRSFKYVYGLRFEVSGQKKLEVDGPCVIISNHQSILDMMGLMEILPKRCVQIAKRELMFTGPVGLIMYLGGVYFINRQQARTAMSVMADLGDLMVKENLKVWIYPEGTRNDNGDLLPFKKGAFYLAIQAQVPIIPVVYSSFSSFYNVKTKLFTSGTIKVQVLDAVPTNGLTDADVTKLVDTCYQSMRATFLQISQIPQENSAIKEPGVLPAQ.

The signal sequence occupies residues 1–23 (MDPWPWLTAALLLLLLLVQLSRT). Residues 24–29 (ARFYAK) lie on the Lumenal side of the membrane. The chain crosses the membrane as a helical span at residues 30–50 (VGLYCVLCLSFSAAASIVCLL). At 51–121 (RHGGRTVDNM…PKRCVQIAKR (71 aa)) the chain is on the cytoplasmic side. The short motif at 98 to 103 (HQSILD) is the HXXXXD motif element. The helical transmembrane segment at 122–142 (ELMFTGPVGLIMYLGGVYFIN) threads the bilayer. The Lumenal segment spans residues 143–278 (RQQARTAMSV…IKEPGVLPAQ (136 aa)). The short motif at 172-175 (EGTR) is the EGTR motif element.

It belongs to the 1-acyl-sn-glycerol-3-phosphate acyltransferase family. Expressed at high levels in the liver, at intermediate levels in the kidney, gut, heart and skeletal muscles. Undetectable in brain and spleen.

It localises to the endoplasmic reticulum membrane. It carries out the reaction a 1-acyl-sn-glycero-3-phosphate + an acyl-CoA = a 1,2-diacyl-sn-glycero-3-phosphate + CoA. The enzyme catalyses 1-(9Z-octadecenoyl)-sn-glycero-3-phosphate + (9Z)-octadecenoyl-CoA = 1,2-di-(9Z-octadecenoyl)-sn-glycero-3-phosphate + CoA. The catalysed reaction is 1-(9Z-octadecenoyl)-sn-glycero-3-phosphate + hexadecanoyl-CoA = 1-(9Z)-octadecenoyl-2-hexadecanoyl-sn-glycero-3-phosphate + CoA. It catalyses the reaction heptadecanoyl-CoA + 1-(9Z-octadecenoyl)-sn-glycero-3-phosphate = 1-(9Z)-octadecenoyl-2-heptadecanoyl-sn-glycero-3-phosphate + CoA. It carries out the reaction 1-(9Z-octadecenoyl)-sn-glycero-3-phosphate + (9Z,12Z)-octadecadienoyl-CoA = 1-(9Z)-octadecenoyl-2-(9Z,12Z)-octadecadienoyl-sn-glycero-3-phosphate + CoA. The enzyme catalyses 1-(9Z-octadecenoyl)-sn-glycero-3-phosphate + tetradecanoyl-CoA = 1-(9Z)-octadecenoyl-2-tetradecanoyl-sn-glycero-3-phosphate + CoA. The catalysed reaction is pentadecanoyl-CoA + 1-(9Z-octadecenoyl)-sn-glycero-3-phosphate = 1-(9Z)-octadecenoyl-2-pentadecanoyl-sn-glycero-3-phosphate + CoA. It catalyses the reaction 1-hexadecanoyl-sn-glycero-3-phosphate + (9Z)-octadecenoyl-CoA = 1-hexadecanoyl-2-(9Z-octadecenoyl)-sn-glycero-3-phosphate + CoA. It carries out the reaction 1-tetradecanoyl-sn-glycerol 3-phosphate + (9Z)-octadecenoyl-CoA = 1-tetradecanoyl-2-(9Z)-octadecenoyl-sn-glycero-3-phosphate + CoA. The enzyme catalyses 1-(9Z,12Z,15Z)-octadecatrienoyl-sn-glycero-3-phosphate + (9Z)-octadecenoyl-CoA = 1-(9Z,12Z,15Z)-octadecatrienoyl-2-(9Z)-octadecenoyl-sn-glycero-3-phosphate + CoA. The catalysed reaction is 1-(6Z,9Z,12Z-octadecatrienoyl)-sn-glycero-3-phosphate + (9Z)-octadecenoyl-CoA = (6Z,9Z,12Z)-octadecatrienoyl-2-(9Z)-octadecenoyl-sn-glycero-3-phosphate + CoA. It catalyses the reaction 1-eicosanoyl-sn-glycero-3-phosphate + (9Z)-octadecenoyl-CoA = 1-eicosanoyl-2-(9Z)-octadecenoyl-sn-glycero-3-phosphate + CoA. It carries out the reaction 1-hexadecanoyl-sn-glycero-3-phosphate + octadecanoyl-CoA = 1-hexadecanoyl-2-octadecanoyl-sn-glycero-3-phosphate + CoA. The enzyme catalyses 1-hexadecanoyl-sn-glycero-3-phosphate + (5Z,8Z,11Z,14Z)-eicosatetraenoyl-CoA = 1-hexadecanoyl-2-(5Z,8Z,11Z,14Z-eicosatetraenoyl)-sn-glycero-3-phosphate + CoA. The catalysed reaction is 1-hexadecanoyl-sn-glycero-3-phosphate + hexadecanoyl-CoA = 1,2-dihexadecanoyl-sn-glycero-3-phosphate + CoA. It catalyses the reaction 1-hexadecanoyl-sn-glycero-3-phosphate + tetradecanoyl-CoA = 1-hexadecanoyl-2-tetradecanoyl-sn-glycero-3-phosphate + CoA. It carries out the reaction (11Z)-octadecenoyl-CoA + 1-(9Z-octadecenoyl)-sn-glycero-3-phosphate = 1-(9Z)-octadecenoyl-2-(11Z)-octadecenoyl-sn-glycero-3-phosphate + CoA. It functions in the pathway phospholipid metabolism; CDP-diacylglycerol biosynthesis; CDP-diacylglycerol from sn-glycerol 3-phosphate: step 2/3. Its function is as follows. Converts 1-acyl-sn-glycerol-3-phosphate (lysophosphatidic acid or LPA) into 1,2-diacyl-sn-glycerol-3-phosphate (phosphatidic acid or PA) by incorporating an acyl moiety at the sn-2 position of the glycerol backbone. The sequence is that of 1-acyl-sn-glycerol-3-phosphate acyltransferase beta (Agpat2) from Mus musculus (Mouse).